The primary structure comprises 351 residues: Uroporphyrinogen decarboxylase (351 aa).

Residues 25 to 29, Asp74, Tyr151, Ser206, and His325 each bind substrate; that span reads RQAGR.

This sequence belongs to the uroporphyrinogen decarboxylase family. Homodimer.

It localises to the cytoplasm. The enzyme catalyses uroporphyrinogen III + 4 H(+) = coproporphyrinogen III + 4 CO2. Its pathway is porphyrin-containing compound metabolism; protoporphyrin-IX biosynthesis; coproporphyrinogen-III from 5-aminolevulinate: step 4/4. In terms of biological role, catalyzes the decarboxylation of four acetate groups of uroporphyrinogen-III to yield coproporphyrinogen-III. This chain is Uroporphyrinogen decarboxylase, found in Chlorobium phaeovibrioides (strain DSM 265 / 1930) (Prosthecochloris vibrioformis (strain DSM 265)).